The following is a 249-amino-acid chain: tRNA pseudouridine synthase A (249 aa).

Residue Asp-54 is the Nucleophile of the active site. Position 112 (Tyr-112) interacts with substrate.

The protein belongs to the tRNA pseudouridine synthase TruA family. In terms of assembly, homodimer.

The enzyme catalyses uridine(38/39/40) in tRNA = pseudouridine(38/39/40) in tRNA. Formation of pseudouridine at positions 38, 39 and 40 in the anticodon stem and loop of transfer RNAs. This chain is tRNA pseudouridine synthase A, found in Latilactobacillus sakei subsp. sakei (strain 23K) (Lactobacillus sakei subsp. sakei).